Consider the following 143-residue polypeptide: Large ribosomal subunit protein uL11 (143 aa).

The protein belongs to the universal ribosomal protein uL11 family. Part of the ribosomal stalk of the 50S ribosomal subunit. Interacts with L10 and the large rRNA to form the base of the stalk. L10 forms an elongated spine to which L12 dimers bind in a sequential fashion forming a multimeric L10(L12)X complex. In terms of processing, one or more lysine residues are methylated.

Its function is as follows. Forms part of the ribosomal stalk which helps the ribosome interact with GTP-bound translation factors. The polypeptide is Large ribosomal subunit protein uL11 (Psychrobacter cryohalolentis (strain ATCC BAA-1226 / DSM 17306 / VKM B-2378 / K5)).